Reading from the N-terminus, the 166-residue chain is Protein-export protein SecB (166 aa).

This sequence belongs to the SecB family. As to quaternary structure, homotetramer, a dimer of dimers. One homotetramer interacts with 1 SecA dimer.

Its subcellular location is the cytoplasm. In terms of biological role, one of the proteins required for the normal export of preproteins out of the cell cytoplasm. It is a molecular chaperone that binds to a subset of precursor proteins, maintaining them in a translocation-competent state. It also specifically binds to its receptor SecA. The polypeptide is Protein-export protein SecB (Cereibacter sphaeroides (strain ATCC 17025 / ATH 2.4.3) (Rhodobacter sphaeroides)).